A 149-amino-acid polypeptide reads, in one-letter code: Transcription antitermination protein NusB (149 aa).

Belongs to the NusB family.

Its function is as follows. Involved in transcription antitermination. Required for transcription of ribosomal RNA (rRNA) genes. Binds specifically to the boxA antiterminator sequence of the ribosomal RNA (rrn) operons. The polypeptide is Transcription antitermination protein NusB (Acinetobacter baumannii (strain AB307-0294)).